Consider the following 353-residue polypeptide: Pleckstrin-2 (353 aa).

Position 1 is an N-acetylmethionine (methionine 1). The PH 1 domain occupies 4-104; it reads GVLKEGFLVK…WAFEITGAIH (101 aa). Phosphoserine is present on serine 120. The DEP domain maps to 139–225; it reads TSTGIRPSPN…DSTALYTFAE (87 aa). Residues 247-353 enclose the PH 2 domain; that stretch reads TVVKQGYLSK…EWIEAIKKLT (107 aa).

As to expression, ubiquitous. Most abundant in the thymus, large bowel, small bowel, stomach, and prostate.

Its subcellular location is the cell projection. The protein resides in the lamellipodium membrane. It localises to the cytoplasm. It is found in the cytoskeleton. In terms of biological role, may help orchestrate cytoskeletal arrangement. Contribute to lamellipodia formation. Overexpression of pleckstrin 2 causes large lamellipodia and peripheral ruffle formation. The protein is Pleckstrin-2 (Plek2) of Mus musculus (Mouse).